Here is a 310-residue protein sequence, read N- to C-terminus: MAARIVFAGTPDFAVPGLDALVEAGVRPVAVFTQPDRPAGRGRRLTPPPVKRAAERHGLGVHQPERLGAEEAEQIRALAPDLMVVVAYGQILRRNVLDVPRFGCVNVHASLLPRWRGAAPIQRALLAGDEQTGVTLMQMDEGLDTGPMLARKATPISADETAGSLHDRLARIGADLLVAHLPEILAGAITPEPQPDDGVTYAAKLTNDESWLDPTEPAEQLERRVRALAPVPGARLQLGETPVRVLAARACAGRPEDRAGTVAAVGSGGIEVATGEGRLEITRLKPAGGREQTAADYLNGRRLVPGEPVQ.

110–113 (SLLP) is a binding site for (6S)-5,6,7,8-tetrahydrofolate.

It belongs to the Fmt family.

The enzyme catalyses L-methionyl-tRNA(fMet) + (6R)-10-formyltetrahydrofolate = N-formyl-L-methionyl-tRNA(fMet) + (6S)-5,6,7,8-tetrahydrofolate + H(+). Functionally, attaches a formyl group to the free amino group of methionyl-tRNA(fMet). The formyl group appears to play a dual role in the initiator identity of N-formylmethionyl-tRNA by promoting its recognition by IF2 and preventing the misappropriation of this tRNA by the elongation apparatus. The polypeptide is Methionyl-tRNA formyltransferase (Halorhodospira halophila (strain DSM 244 / SL1) (Ectothiorhodospira halophila (strain DSM 244 / SL1))).